The chain runs to 637 residues: Threonine--tRNA ligase (637 aa).

Residues 1–61 (MITITLPDSS…ATDAAVRLIT (61 aa)) form the TGS domain. The tract at residues 238 to 528 (DHRKLGAELD…LIEHFAGKFP (291 aa)) is catalytic. Zn(2+)-binding residues include Cys329, His380, and His505.

Belongs to the class-II aminoacyl-tRNA synthetase family. As to quaternary structure, homodimer. Zn(2+) is required as a cofactor.

The protein resides in the cytoplasm. It carries out the reaction tRNA(Thr) + L-threonine + ATP = L-threonyl-tRNA(Thr) + AMP + diphosphate + H(+). Functionally, catalyzes the attachment of threonine to tRNA(Thr) in a two-step reaction: L-threonine is first activated by ATP to form Thr-AMP and then transferred to the acceptor end of tRNA(Thr). Also edits incorrectly charged L-seryl-tRNA(Thr). The polypeptide is Threonine--tRNA ligase (Desulfosudis oleivorans (strain DSM 6200 / JCM 39069 / Hxd3) (Desulfococcus oleovorans)).